The primary structure comprises 124 residues: Glycine cleavage system H protein (124 aa).

A Lipoyl-binding domain is found at 22-104 (KAKVGITDFA…YENGYLFIIE (83 aa)). N6-lipoyllysine is present on Lys-63.

Belongs to the GcvH family. The glycine cleavage system is composed of four proteins: P, T, L and H. Requires (R)-lipoate as cofactor.

In terms of biological role, the glycine cleavage system catalyzes the degradation of glycine. The H protein shuttles the methylamine group of glycine from the P protein to the T protein. The polypeptide is Glycine cleavage system H protein (Endomicrobium trichonymphae).